The following is a 130-amino-acid chain: Glycine cleavage system H protein (130 aa).

Residues I25–R107 form the Lipoyl-binding domain. K66 is modified (N6-lipoyllysine).

This sequence belongs to the GcvH family. As to quaternary structure, the glycine cleavage system is composed of four proteins: P, T, L and H. (R)-lipoate serves as cofactor.

Functionally, the glycine cleavage system catalyzes the degradation of glycine. The H protein shuttles the methylamine group of glycine from the P protein to the T protein. The polypeptide is Glycine cleavage system H protein (Trichormus variabilis (strain ATCC 29413 / PCC 7937) (Anabaena variabilis)).